The following is a 91-amino-acid chain: UPF0250 protein NGO_0791 (91 aa).

It belongs to the UPF0250 family.

In Neisseria gonorrhoeae (strain ATCC 700825 / FA 1090), this protein is UPF0250 protein NGO_0791.